The following is a 327-amino-acid chain: 2-methoxy-6-polyprenyl-1,4-benzoquinol methylase, mitochondrial (327 aa).

A mitochondrion-targeting transit peptide spans 1–49 (MAAPRSCALWSYCGRGWSWAMRGCQLLGLRSSWPGAPLSARLLPQEKRA). Residues T117, D171, and 199 to 200 (DA) each bind S-adenosyl-L-methionine.

It belongs to the class I-like SAM-binding methyltransferase superfamily. MenG/UbiE family. Component of a multi-subunit COQ enzyme complex, composed of at least COQ3, COQ4, COQ5, COQ6, COQ7 and COQ9. Interacts with PYURF; the interaction is direct, stabilizes COQ5 protein and associates PYURF with COQ enzyme complex.

The protein localises to the mitochondrion inner membrane. It catalyses the reaction 2-methoxy-6-(all-trans-decaprenyl)benzene-1,4-diol + S-adenosyl-L-methionine = 5-methoxy-2-methyl-3-(all-trans-decaprenyl)benzene-1,4-diol + S-adenosyl-L-homocysteine + H(+). It participates in cofactor biosynthesis; ubiquinone biosynthesis. Functionally, methyltransferase required for the conversion of 2-decaprenyl-6-methoxy-1,4-benzoquinol (DDMQH2) to 2-decaprenyl-3-methyl-6-methoxy-1,4-benzoquinol (DMQH2). This chain is 2-methoxy-6-polyprenyl-1,4-benzoquinol methylase, mitochondrial, found in Pongo abelii (Sumatran orangutan).